The primary structure comprises 353 residues: DNA polymerase IV (353 aa).

The region spanning 6–187 is the UmuC domain; it reads IIHVDCDCFY…LPVSKLHGVG (182 aa). Mg(2+)-binding residues include aspartate 10 and aspartate 105. Glutamate 106 is an active-site residue.

It belongs to the DNA polymerase type-Y family. As to quaternary structure, monomer. The cofactor is Mg(2+).

The protein resides in the cytoplasm. The enzyme catalyses DNA(n) + a 2'-deoxyribonucleoside 5'-triphosphate = DNA(n+1) + diphosphate. In terms of biological role, poorly processive, error-prone DNA polymerase involved in untargeted mutagenesis. Copies undamaged DNA at stalled replication forks, which arise in vivo from mismatched or misaligned primer ends. These misaligned primers can be extended by PolIV. Exhibits no 3'-5' exonuclease (proofreading) activity. May be involved in translesional synthesis, in conjunction with the beta clamp from PolIII. This Pseudomonas fluorescens (strain Pf0-1) protein is DNA polymerase IV.